A 61-amino-acid polypeptide reads, in one-letter code: Small ribosomal subunit protein uS14 (61 aa).

Positions 24, 27, 40, and 43 each coordinate Zn(2+).

It belongs to the universal ribosomal protein uS14 family. Zinc-binding uS14 subfamily. Part of the 30S ribosomal subunit. Contacts proteins S3 and S10. It depends on Zn(2+) as a cofactor.

Functionally, binds 16S rRNA, required for the assembly of 30S particles and may also be responsible for determining the conformation of the 16S rRNA at the A site. This Halothermothrix orenii (strain H 168 / OCM 544 / DSM 9562) protein is Small ribosomal subunit protein uS14.